The primary structure comprises 138 residues: Basic phospholipase A2 Tbo-G6D49 (138 aa).

A signal peptide spans 1-16 (MRTLWIMAVLLVGVEG). Intrachain disulfides connect Cys42–Cys131, Cys44–Cys60, Cys59–Cys111, Cys65–Cys138, Cys66–Cys104, Cys73–Cys97, and Cys91–Cys102. Residues Tyr43, Gly45, and Gly47 each coordinate Ca(2+). His63 is a catalytic residue. Position 64 (Asp64) interacts with Ca(2+). Asp105 is a catalytic residue.

As to quaternary structure, monomer. Requires Ca(2+) as cofactor. Expressed by the venom gland.

It localises to the secreted. It catalyses the reaction a 1,2-diacyl-sn-glycero-3-phosphocholine + H2O = a 1-acyl-sn-glycero-3-phosphocholine + a fatty acid + H(+). Its function is as follows. Snake venom phospholipase A2 (PLA2) that impairs hemostasis. It weakly inhibits ADP-induced platelet aggregation when tested on platelet rich plasma from human and rabbit blood (15-25% of inhibition at 5-10 ug of enzyme), and dose-dependently inhibits blood coagulation, possibly by inhibiting thrombin activation. Exhibits strong hydrolytic activities toward L-dipalmitoyl phosphatidylcholine. PLA2 catalyzes the calcium-dependent hydrolysis of the 2-acyl groups in 3-sn-phosphoglycerides. The protein is Basic phospholipase A2 Tbo-G6D49 of Craspedocephalus borneensis (Borneo pit viper).